Consider the following 333-residue polypeptide: tRNA N6-adenosine threonylcarbamoyltransferase (333 aa).

Fe cation-binding residues include His-111 and His-115. Substrate is bound by residues 134–138 (LVSGG), Asp-167, Gly-180, and Asn-272. Position 300 (Asp-300) interacts with Fe cation.

It belongs to the KAE1 / TsaD family. Fe(2+) is required as a cofactor.

The protein resides in the cytoplasm. It carries out the reaction L-threonylcarbamoyladenylate + adenosine(37) in tRNA = N(6)-L-threonylcarbamoyladenosine(37) in tRNA + AMP + H(+). In terms of biological role, required for the formation of a threonylcarbamoyl group on adenosine at position 37 (t(6)A37) in tRNAs that read codons beginning with adenine. Is involved in the transfer of the threonylcarbamoyl moiety of threonylcarbamoyl-AMP (TC-AMP) to the N6 group of A37, together with TsaE and TsaB. TsaD likely plays a direct catalytic role in this reaction. This chain is tRNA N6-adenosine threonylcarbamoyltransferase, found in Legionella pneumophila subsp. pneumophila (strain Philadelphia 1 / ATCC 33152 / DSM 7513).